The sequence spans 395 residues: Mevalonate kinase (395 aa).

ATP is bound by residues K13, N55, N104, S135, and 140 to 146 (GAGLGSS). The Proton donor role is filled by S146. Mg(2+) contacts are provided by S146 and E193. Residue D204 is the Proton acceptor of the active site.

This sequence belongs to the GHMP kinase family. Mevalonate kinase subfamily. Homodimer. The cofactor is Mg(2+).

It is found in the cytoplasm. The protein localises to the peroxisome. It carries out the reaction (R)-mevalonate + ATP = (R)-5-phosphomevalonate + ADP + H(+). It functions in the pathway isoprenoid biosynthesis; isopentenyl diphosphate biosynthesis via mevalonate pathway; isopentenyl diphosphate from (R)-mevalonate: step 1/3. Farnesyl pyrophosphate and geranyl pyrophosphate inhibit mevalonate kinase activity by binding competitively at the ATP-binding sites. In terms of biological role, catalyzes the phosphorylation of mevalonate to mevalonate 5-phosphate, a key step in isoprenoid and cholesterol biosynthesis. In Mus musculus (Mouse), this protein is Mevalonate kinase.